A 474-amino-acid chain; its full sequence is Lipoprotein lipase (474 aa).

Residues 1-27 form the signal peptide; that stretch reads MESKALLLVVLGVWLQSLTAFRGGVAA. Residues 32 to 53 form an interaction with GPIHBP1 region; that stretch reads RDFSDIESKFALRTPEDTAEDT. Cys-54 and Cys-67 are oxidised to a cystine. An N-linked (GlcNAc...) asparagine glycan is attached at Asn-70. Tyr-121 is modified (3'-nitrotyrosine). Ser-159 serves as the catalytic Nucleophile. Residue Asp-183 is the Charge relay system of the active site. 3'-nitrotyrosine is present on Tyr-191. Ala-194, Arg-197, Ser-199, and Asp-202 together coordinate Ca(2+). Cys-243 and Cys-266 are oxidised to a cystine. The segment at 243–266 is essential for determining substrate specificity; sequence CNIGEAIRVIAERGLGDVDQLVKC. His-268 serves as the catalytic Charge relay system. 2 disulfides stabilise this stretch: Cys-291–Cys-310 and Cys-302–Cys-305. The PLAT domain occupies 341 to 464; the sequence is FHYQVKIHFS…KGKDSAVFVK (124 aa). The residue at position 343 (Tyr-343) is a 3'-nitrotyrosine. Asn-386 carries an N-linked (GlcNAc...) asparagine glycan. The tract at residues 417–421 is important for interaction with lipoprotein particles; it reads WPDWW. Positions 430–434 are important for heparin binding; that stretch reads RIRVK. Residues 443-467 are interaction with GPIHBP1; the sequence is IFCAREKVSHLQKGKDSAVFVKCHD. Cys-445 and Cys-465 are joined by a disulfide.

The protein belongs to the AB hydrolase superfamily. Lipase family. Homodimer. Interacts with GPIHBP1 with 1:1 stoichiometry. Interacts with APOC2; the interaction activates LPL activity in the presence of lipids. Interaction with heparan sulfate proteoglycans is required to protect LPL against loss of activity. Associates with lipoprotein particles in blood plasma. Interacts with LMF1 and SEL1L; interaction with SEL1L is required to prevent aggregation of newly synthesized LPL in the endoplasmic reticulum (ER), and for normal export of LPL from the ER to the extracellular space. Interacts with SORL1; SORL1 acts as a sorting receptor, promoting LPL localization to endosomes and later to lysosomes, leading to degradation of newly synthesized LPL. Tyrosine nitration after lipopolysaccharide (LPS) challenge down-regulates the lipase activity. Post-translationally, N-glycosylated. In terms of tissue distribution, detected in white and brown adipose tissue and heart muscle, especially at the lumenal surface of capillaries. Detected on capillary endothelium in the lactating mammary gland. Detected in blood plasma (at protein level). Expressed in liver, epididymal fat, heart, psoas muscle, lactating mammary gland, adrenal, lung, and ovary. Highest levels in heart and adrenal gland.

The protein resides in the cell membrane. Its subcellular location is the secreted. It localises to the extracellular space. It is found in the extracellular matrix. It carries out the reaction a triacylglycerol + H2O = a diacylglycerol + a fatty acid + H(+). It catalyses the reaction a 1,2-diacyl-sn-glycero-3-phosphocholine + H2O = a 2-acyl-sn-glycero-3-phosphocholine + a fatty acid + H(+). The enzyme catalyses 1,2,3-tri-(9Z-octadecenoyl)-glycerol + H2O = di-(9Z)-octadecenoylglycerol + (9Z)-octadecenoate + H(+). The catalysed reaction is 1,2-di-(9Z-octadecenoyl)-sn-glycero-3-phosphocholine + H2O = (9Z-octadecenoyl)-sn-glycero-3-phosphocholine + (9Z)-octadecenoate + H(+). It carries out the reaction 1,2,3-tributanoylglycerol + H2O = dibutanoylglycerol + butanoate + H(+). It catalyses the reaction 1,2-dihexadecanoyl-sn-glycero-3-phosphocholine + H2O = hexadecanoyl-sn-glycero-3-phosphocholine + hexadecanoate + H(+). Its activity is regulated as follows. The apolipoprotein APOC2 acts as a coactivator of LPL activity. Ca(2+) binding promotes protein stability and formation of the active homodimer. Interaction with GPIHBP1 protects LPL against inactivation by ANGPTL4. Key enzyme in triglyceride metabolism. Catalyzes the hydrolysis of triglycerides from circulating chylomicrons and very low density lipoproteins (VLDL), and thereby plays an important role in lipid clearance from the blood stream, lipid utilization and storage. Although it has both phospholipase and triglyceride lipase activities it is primarily a triglyceride lipase with low but detectable phospholipase activity. Mediates margination of triglyceride-rich lipoprotein particles in capillaries. Recruited to its site of action on vascular endothelium by binding to GPIHBP1 and cell surface heparan sulfate proteoglycans. This chain is Lipoprotein lipase (Lpl), found in Mus musculus (Mouse).